The chain runs to 535 residues: CTP synthase (535 aa).

Positions M1–L267 are amidoligase domain. Residue S13 participates in CTP binding. Residue S13 coordinates UTP. S14–I19 is a binding site for ATP. Y54 lines the L-glutamine pocket. D71 serves as a coordination point for ATP. Mg(2+) is bound by residues D71 and E141. Residues D148–E150, K188–Q193, and K224 contribute to the CTP site. UTP-binding positions include K188–Q193 and K224. Position 240–242 (R240–A242) interacts with ATP. Residues T293–K535 form the Glutamine amidotransferase type-1 domain. G355 contributes to the L-glutamine binding site. The Nucleophile; for glutamine hydrolysis role is filled by C382. L-glutamine-binding positions include L383 to Q386, E406, and R463. Active-site residues include H508 and E510.

This sequence belongs to the CTP synthase family. In terms of assembly, homotetramer.

The enzyme catalyses UTP + L-glutamine + ATP + H2O = CTP + L-glutamate + ADP + phosphate + 2 H(+). It catalyses the reaction L-glutamine + H2O = L-glutamate + NH4(+). The catalysed reaction is UTP + NH4(+) + ATP = CTP + ADP + phosphate + 2 H(+). It functions in the pathway pyrimidine metabolism; CTP biosynthesis via de novo pathway; CTP from UDP: step 2/2. Its activity is regulated as follows. Allosterically activated by GTP, when glutamine is the substrate; GTP has no effect on the reaction when ammonia is the substrate. The allosteric effector GTP functions by stabilizing the protein conformation that binds the tetrahedral intermediate(s) formed during glutamine hydrolysis. Inhibited by the product CTP, via allosteric rather than competitive inhibition. Catalyzes the ATP-dependent amination of UTP to CTP with either L-glutamine or ammonia as the source of nitrogen. Regulates intracellular CTP levels through interactions with the four ribonucleotide triphosphates. The sequence is that of CTP synthase from Staphylococcus epidermidis (strain ATCC 35984 / DSM 28319 / BCRC 17069 / CCUG 31568 / BM 3577 / RP62A).